A 63-amino-acid polypeptide reads, in one-letter code: MGGLSVGSVVLIALVALLIFGPKKLPELGKAAGSTLREFKNATKGLADDDDDTKSTNVQKEKA.

Residues 1–21 (MGGLSVGSVVLIALVALLIFG) form a helical membrane-spanning segment.

It belongs to the TatA/E family. As to quaternary structure, forms a complex with TatC.

The protein resides in the cell membrane. In terms of biological role, part of the twin-arginine translocation (Tat) system that transports large folded proteins containing a characteristic twin-arginine motif in their signal peptide across membranes. TatA could form the protein-conducting channel of the Tat system. The chain is Sec-independent protein translocase protein TatA from Shouchella clausii (strain KSM-K16) (Alkalihalobacillus clausii).